Consider the following 40-residue polypeptide: Dihydrolipoyl dehydrogenase (40 aa).

Residue 36-40 (EKRGT) coordinates FAD.

This sequence belongs to the class-I pyridine nucleotide-disulfide oxidoreductase family. In terms of assembly, homodimer. Requires FAD as cofactor.

It is found in the mitochondrion matrix. It catalyses the reaction N(6)-[(R)-dihydrolipoyl]-L-lysyl-[protein] + NAD(+) = N(6)-[(R)-lipoyl]-L-lysyl-[protein] + NADH + H(+). In terms of biological role, lipoamide dehydrogenase is a component of the glycine cleavage system as well as of the alpha-ketoacid dehydrogenase complexes. The pyruvate dehydrogenase complex contains multiple copies of three enzymatic components: pyruvate dehydrogenase (E1), dihydrolipoamide acetyltransferase (E2) and lipoamide dehydrogenase (E3). In Solanum tuberosum (Potato), this protein is Dihydrolipoyl dehydrogenase.